Reading from the N-terminus, the 208-residue chain is MDYRNFFTGRPTSEICRDLIGRPFYYQAGGEKIGGYIVESEAYLGIYDRAAHSYGGRRSQANEGLWRAGGTIYIYSQRQYVFFDIACQEEGNPQGVLIRAIEPVWGLDQMLKNRGGKDGVLLTNGPAKLMQAMGIKSRNWDLAPLADSPFVIDLTEKKPAKEIVASPRIGIVQADPAWAQAPLRYYVAGNPYVSGMKKRDWADDHGWL.

This sequence belongs to the DNA glycosylase MPG family.

In Lactobacillus delbrueckii subsp. bulgaricus (strain ATCC BAA-365 / Lb-18), this protein is Putative 3-methyladenine DNA glycosylase.